Consider the following 183-residue polypeptide: Type II secretion system protein H (183 aa).

Residues 1-5 (MRQRG) constitute a propeptide, leader sequence. At Phe6 the chain carries N-methylphenylalanine. Residues 6-26 (FTVLEMMLVVLLMGSAASLVI) form a helical membrane-spanning segment.

As to quaternary structure, type II secretion is composed of four main components: the outer membrane complex, the inner membrane complex, the cytoplasmic secretion ATPase and the periplasm-spanning pseudopilus. Interacts with core component PulG. Interacts with PulM. Cleaved by prepilin peptidase. Post-translationally, methylated by prepilin peptidase at the amino group of the N-terminal phenylalanine once the leader sequence is cleaved by prepilin peptidase.

It is found in the cell inner membrane. Component of the type II secretion system required for the energy-dependent secretion of extracellular factors such as proteases and toxins from the periplasm. Part of the pseudopilus tip complex that is critical for the recognition and binding of secretion substrates. The polypeptide is Type II secretion system protein H (pulH) (Klebsiella michiganensis (strain ATCC 8724 / DSM 4798 / JCM 20051 / NBRC 3318 / NRRL B-199 / KCTC 1686 / BUCSAV 143 / CCM 1901)).